The chain runs to 134 residues: Replication enhancer protein (134 aa).

The protein belongs to the geminiviridae replication enhancer protein family. Homooligomer. Interacts with the replication-associated protein (REP). Interacts with host proliferating cell nuclear antigen (PCNA). Interacts with host retinoblastoma-related protein 1 (RBR1), and may thereby deregulate the host cell cycle. Oligomerization and interaction with PCNA are necessary for optimal replication enhancement.

Functionally, increases viral DNA accumulation. Enhances infectivity and symptom expression. In Nicotiana tabacum (Common tobacco), this protein is Replication enhancer protein.